A 227-amino-acid polypeptide reads, in one-letter code: Translation initiation factor 6 (227 aa).

It belongs to the eIF-6 family.

In terms of biological role, binds to the 50S ribosomal subunit and prevents its association with the 30S ribosomal subunit to form the 70S initiation complex. The chain is Translation initiation factor 6 from Methanococcus maripaludis (strain DSM 14266 / JCM 13030 / NBRC 101832 / S2 / LL).